The following is a 403-amino-acid chain: Creatinase (403 aa).

H232 is an active-site residue.

Belongs to the peptidase M24 family. Creatinase subfamily. As to quaternary structure, homodimer.

It catalyses the reaction creatine + H2O = sarcosine + urea. This chain is Creatinase, found in Pseudomonas putida (Arthrobacter siderocapsulatus).